The chain runs to 173 residues: Skp-like protein (173 aa).

An N-terminal signal peptide occupies residues 1-19 (MKKFLLLSLMSLASSTVFA).

This sequence belongs to the Skp family.

The sequence is that of Skp-like protein from Chlamydia muridarum (strain MoPn / Nigg).